Here is a 232-residue protein sequence, read N- to C-terminus: tRNA (guanine-N(1)-)-methyltransferase (232 aa).

Residues G111 and 131–136 contribute to the S-adenosyl-L-methionine site; that span reads IGDYIL.

The protein belongs to the RNA methyltransferase TrmD family. In terms of assembly, homodimer.

It is found in the cytoplasm. It catalyses the reaction guanosine(37) in tRNA + S-adenosyl-L-methionine = N(1)-methylguanosine(37) in tRNA + S-adenosyl-L-homocysteine + H(+). Functionally, specifically methylates guanosine-37 in various tRNAs. The chain is tRNA (guanine-N(1)-)-methyltransferase from Bartonella tribocorum (strain CIP 105476 / IBS 506).